Here is an 837-residue protein sequence, read N- to C-terminus: Valine--tRNA ligase (837 aa).

The short motif at 46-56 is the 'HIGH' region element; sequence PNLTGTLHIGH. A 'KMSKS' region motif is present at residues 514–518; sequence KMSKS. Lys-517 is an ATP binding site. Residues 767-837 are a coiled coil; that stretch reads VDDTTQRLKS…QLIAKLTKAH (71 aa).

The protein belongs to the class-I aminoacyl-tRNA synthetase family. ValS type 1 subfamily. Monomer.

It localises to the cytoplasm. The catalysed reaction is tRNA(Val) + L-valine + ATP = L-valyl-tRNA(Val) + AMP + diphosphate. Its function is as follows. Catalyzes the attachment of valine to tRNA(Val). As ValRS can inadvertently accommodate and process structurally similar amino acids such as threonine, to avoid such errors, it has a 'posttransfer' editing activity that hydrolyzes mischarged Thr-tRNA(Val) in a tRNA-dependent manner. The chain is Valine--tRNA ligase from Mycoplasma genitalium (strain ATCC 33530 / DSM 19775 / NCTC 10195 / G37) (Mycoplasmoides genitalium).